Consider the following 239-residue polypeptide: Large ribosomal subunit protein uL30 (239 aa).

Residues Met1–Arg37 form a disordered region. Basic and acidic residues predominate over residues Val9–Lys28.

It belongs to the universal ribosomal protein uL30 family.

This Tetrahymena thermophila protein is Large ribosomal subunit protein uL30 (RPL7).